Here is a 60-residue protein sequence, read N- to C-terminus: Large ribosomal subunit protein bL32 (60 aa).

A disordered region spans residues 1–60 (MAVQQVKKSRSKRDMRRSHDSLTNPTLSTDKSTGELHLRHHVSPNGFYKGRKVVDTKSED). Residues 7 to 16 (KKSRSKRDMR) show a composition bias toward basic residues. The span at 22–31 (LTNPTLSTDK) shows a compositional bias: polar residues.

Belongs to the bacterial ribosomal protein bL32 family.

This Francisella tularensis subsp. holarctica (strain LVS) protein is Large ribosomal subunit protein bL32.